The chain runs to 276 residues: Hydroxyethylthiazole kinase (276 aa).

Met53 and Ala202 together coordinate substrate.

Belongs to the Thz kinase family. Mg(2+) serves as cofactor.

The catalysed reaction is 5-(2-hydroxyethyl)-4-methylthiazole + ATP = 4-methyl-5-(2-phosphooxyethyl)-thiazole + ADP + H(+). It participates in cofactor biosynthesis; thiamine diphosphate biosynthesis; 4-methyl-5-(2-phosphoethyl)-thiazole from 5-(2-hydroxyethyl)-4-methylthiazole: step 1/1. Functionally, thiazole kinase involved in thiamine salvage pathway. The protein is Hydroxyethylthiazole kinase (THIM) of Arabidopsis thaliana (Mouse-ear cress).